Consider the following 327-residue polypeptide: Phenylalanine--tRNA ligase alpha subunit (327 aa).

Residue Glu252 participates in Mg(2+) binding.

Belongs to the class-II aminoacyl-tRNA synthetase family. Phe-tRNA synthetase alpha subunit type 1 subfamily. In terms of assembly, tetramer of two alpha and two beta subunits. Requires Mg(2+) as cofactor.

It is found in the cytoplasm. The catalysed reaction is tRNA(Phe) + L-phenylalanine + ATP = L-phenylalanyl-tRNA(Phe) + AMP + diphosphate + H(+). The chain is Phenylalanine--tRNA ligase alpha subunit from Photobacterium profundum (strain SS9).